Reading from the N-terminus, the 102-residue chain is Protein B1 (102 aa).

The segment at 1–102 (MLNDAKQTRA…AQPQPSNNRK (102 aa)) is disordered. Composition is skewed to polar residues over residues 8 to 17 (TRANPGTSRP) and 51 to 65 (GKTN…TAGE). Positions 75–88 (KGPRGGKTNTRRTP) are enriched in basic residues.

Its function is as follows. Not known. Encoded on a subgenomic RNA (RNA3) synthesized during replication and which is co-terminal with RNA1. The chain is Protein B1 (B1) from Black beetle virus (BBV).